The following is a 132-amino-acid chain: Large ribosomal subunit protein uL14 (132 aa).

This sequence belongs to the universal ribosomal protein uL14 family. As to quaternary structure, part of the 50S ribosomal subunit. Forms a cluster with proteins L3 and L24e, part of which may contact the 16S rRNA in 2 intersubunit bridges.

In terms of biological role, binds to 23S rRNA. Forms part of two intersubunit bridges in the 70S ribosome. In Archaeoglobus fulgidus (strain ATCC 49558 / DSM 4304 / JCM 9628 / NBRC 100126 / VC-16), this protein is Large ribosomal subunit protein uL14.